A 274-amino-acid polypeptide reads, in one-letter code: Formamidopyrimidine-DNA glycosylase (274 aa).

P2 functions as the Schiff-base intermediate with DNA in the catalytic mechanism. E3 acts as the Proton donor in catalysis. The active-site Proton donor; for beta-elimination activity is the K58. Residues H92 and R111 each contribute to the DNA site. Residues 239–273 (HVYGREGEPCERCGTIIEKIKVAQRGTHFCPLEQR) form an FPG-type; degenerate zinc finger. R263 functions as the Proton donor; for delta-elimination activity in the catalytic mechanism.

This sequence belongs to the FPG family. Monomer. Zn(2+) serves as cofactor.

It carries out the reaction Hydrolysis of DNA containing ring-opened 7-methylguanine residues, releasing 2,6-diamino-4-hydroxy-5-(N-methyl)formamidopyrimidine.. It catalyses the reaction 2'-deoxyribonucleotide-(2'-deoxyribose 5'-phosphate)-2'-deoxyribonucleotide-DNA = a 3'-end 2'-deoxyribonucleotide-(2,3-dehydro-2,3-deoxyribose 5'-phosphate)-DNA + a 5'-end 5'-phospho-2'-deoxyribonucleoside-DNA + H(+). Its function is as follows. Involved in base excision repair of DNA damaged by oxidation or by mutagenic agents. Acts as a DNA glycosylase that recognizes and removes damaged bases. Has a preference for oxidized purines, such as 7,8-dihydro-8-oxoguanine (8-oxoG). Has AP (apurinic/apyrimidinic) lyase activity and introduces nicks in the DNA strand. Cleaves the DNA backbone by beta-delta elimination to generate a single-strand break at the site of the removed base with both 3'- and 5'-phosphates. This is Formamidopyrimidine-DNA glycosylase from Lactiplantibacillus plantarum (strain ATCC BAA-793 / NCIMB 8826 / WCFS1) (Lactobacillus plantarum).